We begin with the raw amino-acid sequence, 374 residues long: UDP-N-acetylglucosamine--N-acetylmuramyl-(pentapeptide) pyrophosphoryl-undecaprenol N-acetylglucosamine transferase (374 aa).

UDP-N-acetyl-alpha-D-glucosamine is bound by residues 13 to 15, Asn-124, Arg-165, Ser-193, and Gln-294; that span reads TGG.

This sequence belongs to the glycosyltransferase 28 family. MurG subfamily.

It is found in the cell inner membrane. It carries out the reaction di-trans,octa-cis-undecaprenyl diphospho-N-acetyl-alpha-D-muramoyl-L-alanyl-D-glutamyl-meso-2,6-diaminopimeloyl-D-alanyl-D-alanine + UDP-N-acetyl-alpha-D-glucosamine = di-trans,octa-cis-undecaprenyl diphospho-[N-acetyl-alpha-D-glucosaminyl-(1-&gt;4)]-N-acetyl-alpha-D-muramoyl-L-alanyl-D-glutamyl-meso-2,6-diaminopimeloyl-D-alanyl-D-alanine + UDP + H(+). It functions in the pathway cell wall biogenesis; peptidoglycan biosynthesis. Functionally, cell wall formation. Catalyzes the transfer of a GlcNAc subunit on undecaprenyl-pyrophosphoryl-MurNAc-pentapeptide (lipid intermediate I) to form undecaprenyl-pyrophosphoryl-MurNAc-(pentapeptide)GlcNAc (lipid intermediate II). The protein is UDP-N-acetylglucosamine--N-acetylmuramyl-(pentapeptide) pyrophosphoryl-undecaprenol N-acetylglucosamine transferase of Sinorhizobium medicae (strain WSM419) (Ensifer medicae).